The primary structure comprises 614 residues: Lamin-2 (614 aa).

Residues 1-10 are compositionally biased toward basic residues; it reads MSAQVSKKRG. The interval 1 to 51 is disordered; sequence MSAQVSKKRGGSNPPKTGQHAASSTTSRTESSATSQTIYERQEVETRTQRT. A head region spans residues 1-76; sequence MSAQVSKKRG…GTAGLAGSPL (76 aa). A compositionally biased stretch (low complexity) spans 21–37; it reads AASSTTSRTESSATSQT. The interval 77 to 117 is coil 1A; the sequence is SRHQEKEEFKLLNNRFANYIDTIRAQQEEISVLRRKVETVS. In terms of domain architecture, IF rod spans 81–433; it reads EKEEFKLLNN…ALLRTEEERL (353 aa). A linker 1 region spans residues 118–128; the sequence is SKEVVENQKIK. The coil 1B stretch occupies residues 129-268; that stretch reads ERYNLEIANL…EEIVSLRNQR (140 aa). The segment at 269 to 286 is linker 2; sequence RTEITEVETRMGEEYQSK. The coil 2 stretch occupies residues 287–426; it reads IVEQLNDLRA…AELATYNALL (140 aa). The interval 427–611 is tail; sequence RTEEERLNMK…ADSSDHQKNC (185 aa). The disordered stretch occupies residues 433–454; that stretch reads LNMKSPPFPSTPDSQRRGTKRR. The Nuclear localization signal motif lies at 449–458; sequence RGTKRRIADS. Residues 462–581 form the LTD domain; sequence TRFRNEASAT…VARREMTQSS (120 aa). Residue Cys-611 is the site of S-farnesyl cysteine attachment. The propeptide at 612–614 is removed in mature form; the sequence is VIM.

This sequence belongs to the intermediate filament family.

It is found in the nucleus inner membrane. Functionally, intermediate filament (IF) protein, component of the nuclear lamina, a fibrous layer on the nucleoplasmic side of the inner nuclear membrane, which is thought to provide a framework for the nuclear envelope. This Hypsibius exemplaris (Freshwater tardigrade) protein is Lamin-2.